A 689-amino-acid chain; its full sequence is MEYFKKEVDVAGKKFIVESGKVAKQAGGSCTVRIGETVVLVTVVSLKEPKVGIDFMPLTVDYRERTYAAGKIPGGFFKRETRPRDGEVLVSRLIDRSIRPLFPEYYRNDTQISAVVLSHDGENDSEMAAILGASIALYTSDLPFTTPIASVRIGKINGQLIINPLIAEQKLSDLDLVVSGTEEALTMVEAGARELSEAEMLEALNLAGKTLKGICLFQKTLPAKTKIVVEQPQHNSLLKADIEAEAVSKAEMSVVIKEKCEREFFWDSFKKDISSRLLEKYPEELPSTIDAILEDIFYQKARDLVLNKKIRTDGRGFEEIRPITCETGVLPRVHGSSLFTRGQTQALVTVTLGSPCDMQVIDELIVEYKERFMLHYNFPGFATGEPKRDRAVSRREIGHGNLAKKALKHIMPDGEDFGYAVRIVSDILESNGSSSMASVCGGSLALFNAGVPVKSSCAGVSMGLMKEGGSYVILTDITGMEDHLGDMDFKVAGTRKGITALQMDIKILGLTTEIVAQALEQAKRGRFFILDQMDAVVSAPKNDLSNYAPRMITLTIPQNKIGELIGPGGKNIRKIQEDNNVKIDIEETGRVFISGVESDGVKSAKEYVECLTVEAEVGKIYKSRVTKIMAFGAFAEILPGKEGLIHISQLSNRHTKRVEDVVKEGDEVKVKVIEIDKQGRINLSIKAAL.

Mg(2+) is bound by residues Asp-482 and Asp-488. Residues 549–608 (PRMITLTIPQNKIGELIGPGGKNIRKIQEDNNVKIDIEETGRVFISGVESDGVKSAKEYV) enclose the KH domain. The 69-residue stretch at 618–686 (GKIYKSRVTK…KQGRINLSIK (69 aa)) folds into the S1 motif domain.

Belongs to the polyribonucleotide nucleotidyltransferase family. The cofactor is Mg(2+).

The protein localises to the cytoplasm. The catalysed reaction is RNA(n+1) + phosphate = RNA(n) + a ribonucleoside 5'-diphosphate. In terms of biological role, involved in mRNA degradation. Catalyzes the phosphorolysis of single-stranded polyribonucleotides processively in the 3'- to 5'-direction. This chain is Polyribonucleotide nucleotidyltransferase, found in Endomicrobium trichonymphae.